The primary structure comprises 284 residues: MSARILDGKAMADTILAVIHDKVAEREVQGKRRPGLAVILVGGDPASAVYVRNKKRACERAGVNSVSHDLPETTTQPELLALIDTLNSDAAIDGILVQLPLPVHIDAETVIERIRPDKDVDGFHPYNIGRLAVKMPTLRPSTPRGIMTLLRATNEELRGKNAVMVGASNIVGRPMSLELLLAGCTITVCHSATRDLESFVRSAEVLVVGVGRPRMIPGDWVREGAIVIDVGINRLADGKLVGDVDFDTAVERAGWITPVPGGVGPMTVATLLENTLEAALMHNP.

NADP(+) is bound by residues 166–168 (GAS), Ser191, and Ile232.

It belongs to the tetrahydrofolate dehydrogenase/cyclohydrolase family. As to quaternary structure, homodimer.

It carries out the reaction (6R)-5,10-methylene-5,6,7,8-tetrahydrofolate + NADP(+) = (6R)-5,10-methenyltetrahydrofolate + NADPH. The catalysed reaction is (6R)-5,10-methenyltetrahydrofolate + H2O = (6R)-10-formyltetrahydrofolate + H(+). It participates in one-carbon metabolism; tetrahydrofolate interconversion. Its function is as follows. Catalyzes the oxidation of 5,10-methylenetetrahydrofolate to 5,10-methenyltetrahydrofolate and then the hydrolysis of 5,10-methenyltetrahydrofolate to 10-formyltetrahydrofolate. This chain is Bifunctional protein FolD, found in Thiobacillus denitrificans (strain ATCC 25259 / T1).